Reading from the N-terminus, the 415-residue chain is Ankyrin repeat domain-containing protein 10 (415 aa).

ANK repeat units lie at residues 20-49 (SLRF…RAHL), 56-85 (YGWT…SLNV), 90-119 (YAQT…NINK), and 123-152 (EGET…HTDL). The span at 303–325 (TGSNGVSNGQPLSSGQASVSANG) shows a compositional bias: polar residues. Residues 303–330 (TGSNGVSNGQPLSSGQASVSANGTEEPE) are disordered.

This Mus musculus (Mouse) protein is Ankyrin repeat domain-containing protein 10 (Ankrd10).